Here is a 385-residue protein sequence, read N- to C-terminus: Beta sliding clamp (385 aa).

Belongs to the beta sliding clamp family. As to quaternary structure, forms a ring-shaped head-to-tail homodimer around DNA which binds and tethers DNA polymerases and other proteins to the DNA. The DNA replisome complex has a single clamp-loading complex (3 tau and 1 each of delta, delta', psi and chi subunits) which binds 3 Pol III cores (1 core on the leading strand and 2 on the lagging strand) each with a beta sliding clamp dimer. Additional proteins in the replisome are other copies of gamma, psi and chi, Ssb, DNA helicase and RNA primase.

It localises to the cytoplasm. Confers DNA tethering and processivity to DNA polymerases and other proteins. Acts as a clamp, forming a ring around DNA (a reaction catalyzed by the clamp-loading complex) which diffuses in an ATP-independent manner freely and bidirectionally along dsDNA. Initially characterized for its ability to contact the catalytic subunit of DNA polymerase III (Pol III), a complex, multichain enzyme responsible for most of the replicative synthesis in bacteria; Pol III exhibits 3'-5' exonuclease proofreading activity. The beta chain is required for initiation of replication as well as for processivity of DNA replication. The chain is Beta sliding clamp (dnaN) from Borreliella burgdorferi (strain ATCC 35210 / DSM 4680 / CIP 102532 / B31) (Borrelia burgdorferi).